The chain runs to 247 residues: Virulence plasmid protein pGP6-D (247 aa).

The protein belongs to the UPF0137 (pGP6-D) family.

The protein is Virulence plasmid protein pGP6-D of Chlamydia trachomatis.